The following is a 64-amino-acid chain: Large ribosomal subunit protein bL35 (64 aa).

The protein belongs to the bacterial ribosomal protein bL35 family.

The sequence is that of Large ribosomal subunit protein bL35 from Mycoplasmopsis pulmonis (strain UAB CTIP) (Mycoplasma pulmonis).